The following is a 67-amino-acid chain: Amphipathic peptide Tx348 (67 aa).

The N-terminal stretch at 1–23 (MKSQAFFLLFLVVLLLATTQSEA) is a signal peptide. Phenylalanine 33 is subject to Phenylalanine amide. Residues 37-67 (SMRNMDTMKYLYDPSLSAADLKTLQKLMENY) constitute a propeptide that is removed on maturation.

Belongs to the non-disulfide-bridged peptide (NDBP) superfamily. Short antimicrobial peptide (group 4) family. Expressed by the venom gland.

Its subcellular location is the secreted. It is found in the target cell membrane. In terms of biological role, amphipathic peptide that has antibacterial activities. The polypeptide is Amphipathic peptide Tx348 (Buthus israelis (Israeli scorpion)).